Here is a 22-residue protein sequence, read N- to C-terminus: Pectinesterase (22 aa).

The active-site Proton donor is Asp6. Residues Arg19 and Trp21 each coordinate substrate.

This sequence belongs to the pectinesterase family.

It is found in the secreted. The protein resides in the cell wall. The catalysed reaction is [(1-&gt;4)-alpha-D-galacturonosyl methyl ester](n) + n H2O = [(1-&gt;4)-alpha-D-galacturonosyl](n) + n methanol + n H(+). It participates in glycan metabolism; pectin degradation; 2-dehydro-3-deoxy-D-gluconate from pectin: step 1/5. This chain is Pectinesterase, found in Capsicum chinense (Scotch bonnet).